Consider the following 186-residue polypeptide: MDKEHLKKNLQEKMEKALKVLDHELKGLRTGRASVNLLDSVTVEAYGSKMPLSQVASLSTPDARTINVQVWDKSMVSSVEKGITIANLGLTPATDGQLIRLPIPALTEERRTELVKLAHKYGEDTKISLRNIRRDGNEALKKLEKDNVIAKDEHHSLSEQVQKLTDDYSSKVDSVIKQKEQEIMTV.

The protein belongs to the RRF family.

It is found in the cytoplasm. Responsible for the release of ribosomes from messenger RNA at the termination of protein biosynthesis. May increase the efficiency of translation by recycling ribosomes from one round of translation to another. The protein is Ribosome-recycling factor of Rickettsia peacockii (strain Rustic).